The primary structure comprises 276 residues: Diaminopimelate epimerase (276 aa).

Residues asparagine 13, glutamine 46, and asparagine 66 each contribute to the substrate site. The Proton donor role is filled by cysteine 75. Substrate contacts are provided by residues 76-77 (GN), asparagine 159, asparagine 192, and 210-211 (ER). The active-site Proton acceptor is the cysteine 219. Position 220-221 (220-221 (GS)) interacts with substrate.

The protein belongs to the diaminopimelate epimerase family. As to quaternary structure, homodimer.

The protein resides in the cytoplasm. The enzyme catalyses (2S,6S)-2,6-diaminopimelate = meso-2,6-diaminopimelate. It participates in amino-acid biosynthesis; L-lysine biosynthesis via DAP pathway; DL-2,6-diaminopimelate from LL-2,6-diaminopimelate: step 1/1. In terms of biological role, catalyzes the stereoinversion of LL-2,6-diaminopimelate (L,L-DAP) to meso-diaminopimelate (meso-DAP), a precursor of L-lysine and an essential component of the bacterial peptidoglycan. This chain is Diaminopimelate epimerase, found in Vibrio vulnificus (strain CMCP6).